Consider the following 353-residue polypeptide: tRNA-specific 2-thiouridylase MnmA 2 (353 aa).

6 to 13 (LLSGGVDS) lines the ATP pocket. The interaction with target base in tRNA stretch occupies residues 92 to 94 (NPD). Cys-97 acts as the Nucleophile in catalysis. Cysteines 97 and 192 form a disulfide. Residue Gly-120 coordinates ATP. An interaction with tRNA region spans residues 142-144 (KDQ). Catalysis depends on Cys-192, which acts as the Cysteine persulfide intermediate.

It belongs to the MnmA/TRMU family.

The protein resides in the cytoplasm. The catalysed reaction is S-sulfanyl-L-cysteinyl-[protein] + uridine(34) in tRNA + AH2 + ATP = 2-thiouridine(34) in tRNA + L-cysteinyl-[protein] + A + AMP + diphosphate + H(+). Its function is as follows. Catalyzes the 2-thiolation of uridine at the wobble position (U34) of tRNA, leading to the formation of s(2)U34. This Bacteroides fragilis (strain ATCC 25285 / DSM 2151 / CCUG 4856 / JCM 11019 / LMG 10263 / NCTC 9343 / Onslow / VPI 2553 / EN-2) protein is tRNA-specific 2-thiouridylase MnmA 2.